The following is a 442-amino-acid chain: tRNA modification GTPase MnmE (442 aa).

Residues Arg27, Glu84, and Lys124 each coordinate (6S)-5-formyl-5,6,7,8-tetrahydrofolate. The 146-residue stretch at 221–366 (GLHVVIVGAP…LLDALQAFAE (146 aa)) folds into the TrmE-type G domain. Residues 231-236 (NAGKSS), 250-256 (SEEAGTT), and 275-278 (DTAG) contribute to the GTP site. The Mg(2+) site is built by Ser235 and Thr256. Residue Lys442 coordinates (6S)-5-formyl-5,6,7,8-tetrahydrofolate.

It belongs to the TRAFAC class TrmE-Era-EngA-EngB-Septin-like GTPase superfamily. TrmE GTPase family. Homodimer. Heterotetramer of two MnmE and two MnmG subunits. K(+) serves as cofactor.

The protein localises to the cytoplasm. In terms of biological role, exhibits a very high intrinsic GTPase hydrolysis rate. Involved in the addition of a carboxymethylaminomethyl (cmnm) group at the wobble position (U34) of certain tRNAs, forming tRNA-cmnm(5)s(2)U34. The sequence is that of tRNA modification GTPase MnmE from Brucella suis (strain ATCC 23445 / NCTC 10510).